Here is a 153-residue protein sequence, read N- to C-terminus: Deoxyuridine 5'-triphosphate nucleotidohydrolase (153 aa).

Substrate is bound by residues 71–73 (RSG), asparagine 84, 88–90 (LID), and methionine 98.

Belongs to the dUTPase family. The cofactor is Mg(2+).

It carries out the reaction dUTP + H2O = dUMP + diphosphate + H(+). It functions in the pathway pyrimidine metabolism; dUMP biosynthesis; dUMP from dCTP (dUTP route): step 2/2. In terms of biological role, this enzyme is involved in nucleotide metabolism: it produces dUMP, the immediate precursor of thymidine nucleotides and it decreases the intracellular concentration of dUTP so that uracil cannot be incorporated into DNA. In Hydrogenovibrio crunogenus (strain DSM 25203 / XCL-2) (Thiomicrospira crunogena), this protein is Deoxyuridine 5'-triphosphate nucleotidohydrolase.